Here is a 447-residue protein sequence, read N- to C-terminus: Tubulin beta chain (447 aa).

GTP contacts are provided by glutamine 11, glutamate 69, serine 138, glycine 142, threonine 143, glycine 144, asparagine 204, and asparagine 226. Residue glutamate 69 participates in Mg(2+) binding. The interval 427 to 447 (DAGIDEEEEEYEEELPLEGEE) is disordered. Residues 429–447 (GIDEEEEEYEEELPLEGEE) are compositionally biased toward acidic residues.

Belongs to the tubulin family. In terms of assembly, dimer of alpha and beta chains. A typical microtubule is a hollow water-filled tube with an outer diameter of 25 nm and an inner diameter of 15 nM. Alpha-beta heterodimers associate head-to-tail to form protofilaments running lengthwise along the microtubule wall with the beta-tubulin subunit facing the microtubule plus end conferring a structural polarity. Microtubules usually have 13 protofilaments but different protofilament numbers can be found in some organisms and specialized cells. Mg(2+) serves as cofactor.

The protein localises to the cytoplasm. The protein resides in the cytoskeleton. Tubulin is the major constituent of microtubules, a cylinder consisting of laterally associated linear protofilaments composed of alpha- and beta-tubulin heterodimers. Microtubules grow by the addition of GTP-tubulin dimers to the microtubule end, where a stabilizing cap forms. Below the cap, tubulin dimers are in GDP-bound state, owing to GTPase activity of alpha-tubulin. The polypeptide is Tubulin beta chain (TUB2) (Hapsidospora chrysogena (Acremonium chrysogenum)).